Consider the following 82-residue polypeptide: Endocuticle structural glycoprotein ABD-5 (82 aa).

At Q1 the chain carries Pyrrolidone carboxylic acid. Residues 18 to 82 enclose the Chitin-binding type R&amp;R domain; that stretch reads LGQYNFAYRT…ENGYQPRVQS (65 aa).

Its function is as follows. Component of the soft endocuticle of migratory locust. This Locusta migratoria (Migratory locust) protein is Endocuticle structural glycoprotein ABD-5.